The following is a 620-amino-acid chain: Carotenoid isomerooxygenase (620 aa).

Residues H211, H267, and H337 each coordinate Fe cation. A disordered region spans residues 440-459 (NGKQATAGEESPKRDAKRGR). The span at 449–459 (ESPKRDAKRGR) shows a compositional bias: basic and acidic residues. H612 is a binding site for Fe cation.

The protein belongs to the carotenoid oxygenase family. Fe(2+) is required as a cofactor. In terms of tissue distribution, expression follows organogenesis of the larval Bolwig's organ (BO), which mediates larval photophobic behavior. In the adult, expression is restricted exclusively to the brain. Expressed in both neuronal cells and glia cells. Not active within photoreceptors. Active within neuronal cells within the central nervous system.

It catalyses the reaction all-trans-zeaxanthin + O2 = (3R)-11-cis-3-hydroxyretinal + (3R)-all-trans-3-hydroxyretinal. Its pathway is cofactor metabolism; retinol metabolism. Functionally, catalyzes the oxidative cleavage at the 15,15'-double bond of carotenoids and the simultaneous all-trans to 11-cis isomerization of one cleavage product. Carotenoids like 11-cis retinal can promote visual pigment biogenesis in the dark. Essential for the biosynthesis of the 3-hydroxyretinal chromophore of rhodopsin from zeaxanthin and for proper photoreceptor development. Also essential for larval light perception. This is Carotenoid isomerooxygenase (ninaB) from Drosophila melanogaster (Fruit fly).